Consider the following 242-residue polypeptide: UPF0246 protein SP70585_1589 (242 aa).

This sequence belongs to the UPF0246 family.

The sequence is that of UPF0246 protein SP70585_1589 from Streptococcus pneumoniae (strain 70585).